Reading from the N-terminus, the 121-residue chain is Ribosome-binding factor A (121 aa).

The protein belongs to the RbfA family. Monomer. Binds 30S ribosomal subunits, but not 50S ribosomal subunits or 70S ribosomes.

It localises to the cytoplasm. Functionally, one of several proteins that assist in the late maturation steps of the functional core of the 30S ribosomal subunit. Associates with free 30S ribosomal subunits (but not with 30S subunits that are part of 70S ribosomes or polysomes). Required for efficient processing of 16S rRNA. May interact with the 5'-terminal helix region of 16S rRNA. The protein is Ribosome-binding factor A of Brevibacillus brevis (strain 47 / JCM 6285 / NBRC 100599).